Reading from the N-terminus, the 70-residue chain is NADH dehydrogenase [ubiquinone] 1 alpha subcomplex subunit 1 (70 aa).

The chain crosses the membrane as a helical span at residues 1–21; sequence MWFEILPGLAVMGVCLVIPGV.

This sequence belongs to the complex I NDUFA1 subunit family. In terms of assembly, complex I is composed of 45 different subunits.

It localises to the mitochondrion inner membrane. Functionally, accessory subunit of the mitochondrial membrane respiratory chain NADH dehydrogenase (Complex I), that is believed not to be involved in catalysis. Complex I functions in the transfer of electrons from NADH to the respiratory chain. The immediate electron acceptor for the enzyme is believed to be ubiquinone. This Cricetulus griseus (Chinese hamster) protein is NADH dehydrogenase [ubiquinone] 1 alpha subcomplex subunit 1 (NDUFA1).